Reading from the N-terminus, the 997-residue chain is Glutamate [NMDA] receptor subunit 1 (997 aa).

The signal sequence occupies residues 1–26; that stretch reads MAVAGFVFCWPLLGLTIVLLVAPIDA. The Extracellular segment spans residues 27-573; the sequence is AQRHTASDNP…TLVSFLQPFS (547 aa). Residues Asn258, Asn314, Asn345, Asn397, Asn454, Asn481, and Asn501 are each glycosylated (N-linked (GlcNAc...) asparagine). Glycine contacts are provided by residues 530–532 and Arg537; that span reads PLT. A helical transmembrane segment spans residues 574–594; sequence NTLWILVMVSVHVVALVLYLL. The Cytoplasmic portion of the chain corresponds to 595–651; the sequence is DRFSPFGRFKLSHSDSNEEKALNLSSAVWFAWGVLLNSGIGEGTPRSFSARVLGMVW. The helical transmembrane segment at 652–672 threads the bilayer; it reads AGFAMIIVASYTANLAAFLVL. Over 673 to 831 the chain is Extracellular; sequence ERPKTKLSGI…KTPNTLGLKN (159 aa). A glycan (N-linked (GlcNAc...) asparagine) is linked at Asn693. Ser703 and Asp747 together coordinate glycine. Residues 832-852 traverse the membrane as a helical segment; the sequence is MAGVFILVGVGIAGGVGLIII. Over 853–997 the chain is Cytoplasmic; that stretch reads EVIYKKHQVK…YTSDVSHLVV (145 aa). The tract at residues 970–997 is disordered; that stretch reads LGKTRPQQSVLPPRYSPGYTSDVSHLVV. Residues 987-997 are compositionally biased toward polar residues; sequence GYTSDVSHLVV.

This sequence belongs to the glutamate-gated ion channel (TC 1.A.10.1) family. As to quaternary structure, forms a heteromeric NMDA channel with Nmdar2.

The protein resides in the cell membrane. It localises to the postsynaptic cell membrane. The protein localises to the postsynaptic density. Functionally, NMDA receptor subtype of glutamate-gated ion channels with high calcium permeability and voltage-dependent sensitivity to magnesium. Mediated by glycine. This protein plays a key role in synaptic plasticity, synaptogenesis, excitotoxicity, memory acquisition and learning. It mediates neuronal functions in glutamate neurotransmission. Is involved in the cell surface targeting of NMDA receptors. Plays a role in associative learning and in long-term memory consolidation. This Drosophila yakuba (Fruit fly) protein is Glutamate [NMDA] receptor subunit 1.